A 465-amino-acid chain; its full sequence is Lactaldehyde dehydrogenase (465 aa).

Residue 220–225 (GSVEVG) participates in NAD(+) binding. Residues glutamate 240 and cysteine 274 contribute to the active site.

The protein belongs to the aldehyde dehydrogenase family. In terms of assembly, homotetramer.

The enzyme catalyses (S)-lactaldehyde + NAD(+) + H2O = (S)-lactate + NADH + 2 H(+). It functions in the pathway cofactor biosynthesis; coenzyme F420 biosynthesis. Involved in F420 biosynthesis through the oxidation of lactaldehyde to lactate. The polypeptide is Lactaldehyde dehydrogenase (Methanococcus vannielii (strain ATCC 35089 / DSM 1224 / JCM 13029 / OCM 148 / SB)).